A 152-amino-acid polypeptide reads, in one-letter code: Large ribosomal subunit protein uL15 (152 aa).

It belongs to the universal ribosomal protein uL15 family. Part of the 50S ribosomal subunit.

Binds to the 23S rRNA. This is Large ribosomal subunit protein uL15 from Staphylothermus marinus (strain ATCC 43588 / DSM 3639 / JCM 9404 / F1).